We begin with the raw amino-acid sequence, 313 residues long: Tyrosine recombinase slr0733 (313 aa).

One can recognise a Core-binding (CB) domain in the interval 7–101 (NNLSGLNQNI…AIKSLVNYAR (95 aa)). The region spanning 122–307 (RDTTGVSPTS…RHQHQAQITD (186 aa)) is the Tyr recombinase domain. Residues Arg162, Lys188, His258, Arg261, and His285 contribute to the active site. The active-site O-(3'-phospho-DNA)-tyrosine intermediate is the Tyr294.

Belongs to the 'phage' integrase family.

It is found in the cytoplasm. In terms of biological role, site-specific tyrosine recombinase, which acts by catalyzing the cutting and rejoining of the recombining DNA molecules. This is Tyrosine recombinase slr0733 from Synechocystis sp. (strain ATCC 27184 / PCC 6803 / Kazusa).